The sequence spans 461 residues: Chromosomal replication initiator protein DnaA (461 aa).

Residues 1–83 are domain I, interacts with DnaA modulators; sequence MTASLWQQCL…LHFAVGRRPT (83 aa). A domain II region spans residues 83–124; it reads TAATVQMNTAAAPVADVRIGPAITVPSWTSKQDAMPEINHKS. The interval 125–341 is domain III, AAA+ region; sequence NINETYTFEN…GALNRVIANA (217 aa). The ATP site is built by Gly-169, Gly-171, Lys-172, and Thr-173. The tract at residues 342-461 is domain IV, binds dsDNA; it reads RFTGKPINID…YSNLIRTLSS (120 aa).

The protein belongs to the DnaA family. Oligomerizes as a right-handed, spiral filament on DNA at oriC.

It is found in the cytoplasm. Its function is as follows. Plays an essential role in the initiation and regulation of chromosomal replication. ATP-DnaA binds to the origin of replication (oriC) to initiate formation of the DNA replication initiation complex once per cell cycle. Binds the DnaA box (a 9 base pair repeat at the origin) and separates the double-stranded (ds)DNA. Forms a right-handed helical filament on oriC DNA; dsDNA binds to the exterior of the filament while single-stranded (ss)DNA is stabiized in the filament's interior. The ATP-DnaA-oriC complex binds and stabilizes one strand of the AT-rich DNA unwinding element (DUE), permitting loading of DNA polymerase. After initiation quickly degrades to an ADP-DnaA complex that is not apt for DNA replication. Binds acidic phospholipids. The chain is Chromosomal replication initiator protein DnaA from Tolumonas auensis (strain DSM 9187 / NBRC 110442 / TA 4).